The chain runs to 975 residues: MKHEHPDRLMNRTPLSLAALETHDAFAERHIGPDAASQQAMLDTLGFASRAALIDAVIPASIRRAEALPLGPFAQPKSEAEALAALRALADKNQVFRSYIGQGYYDSHTPAVILRNVLENPAWYTAYTPYQPEISQGRLEALLNFQQMVVDLTGLAISNASLLDEATAAAEAMTLLQRTGKPKSNVFYVADDVLPQTLEVVRTRALPIGIEVKTGPAAEAAQAGAFGVLLQYPGVNGDVRDYRALTDAIHAAGGHVVVAADLLALTVLTPPGEWGADVAVGNTQRFGVPMGFGGPHAAYMAVRDEFKRQMPGRLVGVTVDAQGKPALRLALQTREQHIRREKATSNVCTAQALLAIMASMYAVYHGPHGLKTIALRVNRIAALLAAGVKQLGFTTVNDTFFDTLTIDAGARTAQLHAFANAKRINLRRVSDTQVGVSVDETTTRDDLADLLAVFAQAAGGTAPDVDALDAGLPGVAALPAGLERTSAYLTHHVFNRHHSETEMLRYLRSLSDKDLALDRSMIPLGSCTMKLNATSEMLPVTWPEFGRIHPFAPSEQTAGYREMIDQLEQMLVAATGYAAVSLQPNAGSQGEYAGLLVIHAYHASRGEAHRDVCLIPASAHGTNPASAHMAGMKVVVVACDAQGNVDIADLKAKAEQHANDLAAIMITYPSTHGVFEQNVREICEIVHAHGGQVYVDGANMNAMVGLTAPGQFGGDVSHLNLHKTFCIPHGGGGPGVGPVAVGPHLAKFLPNQRSTGYARGEEGIGAVSAAPYGSASILPISWMYIAMMGAKNLTAATETAILNANYIAKRLAPHYPVLYSGPGGLVAHECILDLRPIKETSGITVDDVAKRLMDYGFHAPTMSFPVPGTLMVEPTESESQEELDRFIAAMIAIREEIRAVEEGRADREDNPLRHAPHTAAVVTANEWPHAYSREQAAYPVASLVTNKYWPPVGRADNAYGDRNLFCSCVPMSEYA.

Residue Lys723 is modified to N6-(pyridoxal phosphate)lysine.

This sequence belongs to the GcvP family. In terms of assembly, the glycine cleavage system is composed of four proteins: P, T, L and H. Pyridoxal 5'-phosphate serves as cofactor.

The enzyme catalyses N(6)-[(R)-lipoyl]-L-lysyl-[glycine-cleavage complex H protein] + glycine + H(+) = N(6)-[(R)-S(8)-aminomethyldihydrolipoyl]-L-lysyl-[glycine-cleavage complex H protein] + CO2. In terms of biological role, the glycine cleavage system catalyzes the degradation of glycine. The P protein binds the alpha-amino group of glycine through its pyridoxal phosphate cofactor; CO(2) is released and the remaining methylamine moiety is then transferred to the lipoamide cofactor of the H protein. This is Glycine dehydrogenase (decarboxylating) from Burkholderia vietnamiensis (strain G4 / LMG 22486) (Burkholderia cepacia (strain R1808)).